The primary structure comprises 276 residues: NADPH-dependent 7-cyano-7-deazaguanine reductase (276 aa).

Residue 83–85 (IES) coordinates substrate. Position 85 to 86 (85 to 86 (SK)) interacts with NADPH. C184 acts as the Thioimide intermediate in catalysis. D191 (proton donor) is an active-site residue. 223–224 (HE) contacts substrate. 252-253 (RG) contacts NADPH.

It belongs to the GTP cyclohydrolase I family. QueF type 2 subfamily. As to quaternary structure, homodimer.

The protein resides in the cytoplasm. The enzyme catalyses 7-aminomethyl-7-carbaguanine + 2 NADP(+) = 7-cyano-7-deazaguanine + 2 NADPH + 3 H(+). Its pathway is tRNA modification; tRNA-queuosine biosynthesis. In terms of biological role, catalyzes the NADPH-dependent reduction of 7-cyano-7-deazaguanine (preQ0) to 7-aminomethyl-7-deazaguanine (preQ1). The polypeptide is NADPH-dependent 7-cyano-7-deazaguanine reductase (Ectopseudomonas mendocina (strain ymp) (Pseudomonas mendocina)).